The sequence spans 839 residues: Dynein axonemal assembly factor 5 (839 aa).

HEAT repeat units follow at residues 10–48 (TSDVTKALARHLNCLNDENKMIRRRALAAIQKEAADEKL), 54–92 (QHVFLELLKPLLRCLSDPMEKCRELSIQIIVYCVSHVPR), 94–137 (EEAL…VCGK), 140–178 (APYLDEMIQIFQRTMVDPFPDVKKESCKCASNYATCIPE), 181–219 (HMQAESLIKPLMQTISHQHSKVRVAVIQTTGTVIQYSSG), 221–257 (SVDDVLSHLAQRLFDDSVQVRQAVTVVVGDWLLKLQD), 259–297 (YSFFHKLIPLLLSSTTDEIPEIRKLALDYWEKIGSQWEK), 578–617 (GETLHLFVPILKMCLQPTREPQMRLKLFTMLSKLLLKASE), 675–713 (LQVEDNLMPRVITTLEEDSKMCRLMSCCIITALLSTCER), 717–755 (PDKLNKIYPELLKRLDDASDEVRVAAAKTLYQWFKCITD), and 723–761 (IYPELLKRLDDASDEVRVAAAKTLYQWFKCITDEYERTT).

Belongs to the DNAAF5 family. In terms of assembly, interacts with DNAI2; probably involved in outer arm dynein assembly.

It localises to the cytoplasm. The protein resides in the dynein axonemal particle. Functionally, cytoplasmic protein involved in the delivery of the dynein machinery to the motile cilium. It is required for the assembly of the axonemal dynein inner and outer arms, two structures attached to the peripheral outer doublet A microtubule of the axoneme, that play a crucial role in cilium motility. The chain is Dynein axonemal assembly factor 5 from Xenopus laevis (African clawed frog).